The chain runs to 305 residues: Acetaldehyde dehydrogenase 5 (305 aa).

11-14 (SGNI) serves as a coordination point for NAD(+). Cysteine 130 (acyl-thioester intermediate) is an active-site residue. Residues 161–169 (SIGPGTRAN) and asparagine 272 contribute to the NAD(+) site.

It belongs to the acetaldehyde dehydrogenase family.

It carries out the reaction acetaldehyde + NAD(+) + CoA = acetyl-CoA + NADH + H(+). This Dechloromonas aromatica (strain RCB) protein is Acetaldehyde dehydrogenase 5.